We begin with the raw amino-acid sequence, 226 residues long: Transmembrane protein 98 (226 aa).

Residues 1–3 (MET) lie on the Cytoplasmic side of the membrane. The tract at residues 1 to 88 (METVVIVAIG…ENEDWIEDAS (88 aa)) is required for interaction with MYRF. Residues 4 to 24 (VVIVAIGVLATIFLASFAALV) form a helical membrane-spanning segment. Topologically, residues 25–226 (VVCRQRYCRP…EGFLQEQSAI (202 aa)) are extracellular. Positions 207–226 (SEPDKSLPNPEGFLQEQSAI) are disordered.

It belongs to the TMEM98 family. In terms of assembly, interacts (via N-terminal region) with MYRF; the interaction inhibits MYRF self-cleavage. In terms of tissue distribution, expressed in differentiated oligodendrocytes in early postanatal central nervous system tissues. Expressed by CD4(+) T cells, the expression increases upon activation (at protein level).

It is found in the endoplasmic reticulum membrane. It localises to the cell membrane. The protein localises to the secreted. Its subcellular location is the extracellular exosome. Functionally, functions as a negative regulator of MYRF in oligodendrocyte differentiation and myelination. Interacts with the C-terminal of MYRF inhibiting MYRF self-cleavage and N-fragment nuclear translocation. The secreted form promotes differentiation of T helper 1 cells (Th1). This Mus musculus (Mouse) protein is Transmembrane protein 98 (Tmem98).